A 170-amino-acid chain; its full sequence is Arginine repressor (170 aa).

It belongs to the ArgR family.

The protein resides in the cytoplasm. The protein operates within amino-acid biosynthesis; L-arginine biosynthesis [regulation]. Functionally, regulates arginine biosynthesis genes. The sequence is that of Arginine repressor from Bifidobacterium longum (strain DJO10A).